Reading from the N-terminus, the 268-residue chain is Probable histidine-binding protein (268 aa).

An N-terminal signal peptide occupies residues 1–20; that stretch reads MNMKKWIAAALACSALALSA. Cys21 carries the N-palmitoyl cysteine lipid modification. A lipid anchor (S-diacylglycerol cysteine) is attached at Cys21.

Belongs to the bacterial solute-binding protein 3 family.

The protein localises to the cell membrane. Involved in histidine transport. The protein is Probable histidine-binding protein (hisJ) of Neisseria gonorrhoeae.